Here is a 237-residue protein sequence, read N- to C-terminus: Putative anti-FlhC(2)FlhD(4) factor YdiV (237 aa).

The EAL domain occupies 1–237 (MKIFLENLYH…INQITTLVQR (237 aa)).

The protein belongs to the YdiV family.

Functionally, upon overexpression acts as a novel anti-FlhC(2)FlhD(4) factor, decreasing its DNA-binding activity, able to negatively regulate expression of flagellar class II operons including FliC. This Escherichia coli (strain K12) protein is Putative anti-FlhC(2)FlhD(4) factor YdiV (ydiV).